The sequence spans 308 residues: V-type immunoglobulin domain-containing suppressor of T-cell activation (308 aa).

A signal peptide spans 1-32; the sequence is MGVPAVPEASSPRWGTLLLAIFLAASRGLVAA. In terms of domain architecture, Ig-like V-type spans 33-167; it reads FKVTTPYSLY…RFYGSMELQV (135 aa). The Extracellular segment spans residues 33–191; the sequence is FKVTTPYSLY…EQDSDSITAA (159 aa). N-linked (GlcNAc...) asparagine glycosylation is found at Asn49, Asn91, and Asn127. A disulfide bridge connects residues Cys54 and Cys145. The chain crosses the membrane as a helical span at residues 192-212; the sequence is ALATGACIVGILCLPLILLLV. Residues 213 to 308 are Cytoplasmic-facing; that stretch reads YKQRQVASHR…VPDSPNSEAI (96 aa). The segment at 230–308 is disordered; that stretch reads MDSNTQGIEN…VPDSPNSEAI (79 aa). Ser232 carries the post-translational modification Phosphoserine.

In terms of processing, at the cell surface, may be cleaved by MMP14. Post-translationally, N-glycosylated. Expressed in spleen, thymus, bone marrow, lymph node, and in T-cells within the lamina propria of the small intestine. Detected on CD4+ and CD8+ T-cells, bone marrow-derived dendritic cells (BMDCs), peritoneal macrophages, neutrophils, and natural killer (NK) cells. In spleen and lymph nodes, highly expressed on CD4+ T-cell populations, and at lower levels on CD8+ T-cells. In thymus, has low expression on CD4+ cells and CD8+ cells, and not detected on CD4+CD8+ cells. Expressed in splenic and peritoneal CD11b cells. Not detected in most B cells and NK cells (at protein level). Also detected at lower levels in non-hematopoeitic tissues such as heart, brain, lung, kidney, muscle, ovary, and testis.

It is found in the cell membrane. Functionally, immunoregulatory receptor which inhibits the T-cell response. May promote differentiation of embryonic stem cells, by inhibiting BMP4 signaling. May stimulate MMP14-mediated MMP2 activation. The chain is V-type immunoglobulin domain-containing suppressor of T-cell activation from Mus musculus (Mouse).